The following is a 189-amino-acid chain: HTH-type transcriptional repressor LfrR (189 aa).

An HTH tetR-type domain is found at 12–70 (ERTRRAILDAAMLVLADHPTAALGDIAAAAGVGRSTVHRYYPERTDLLRALARHVHDLS). Positions 33–52 (ALGDIAAAAGVGRSTVHRYY) form a DNA-binding region, H-T-H motif. The interval 70–71 (SN) is proflavine binding.

In terms of assembly, homodimer. Forms a structurally asymmetric homodimer exhibiting local unfolding and a blocked drug-binding site.

Its activity is regulated as follows. Repressor activity is regulated by binding of different substrates of the LfrA multidrug efflux pump, such as acriflavine, proflavine, ethidium bromide and rhodamine 123. Binding of these ligands causes the dissociation of LfrR from the promoter, inducing lfrA expression. Functionally, represses the transcription of the lfrRA operon by binding directly to the promoter region of lfrR-lfrA. Binds specifically to a 143-bp region upstream of the lfrR gene. This is HTH-type transcriptional repressor LfrR from Mycolicibacterium smegmatis (strain ATCC 700084 / mc(2)155) (Mycobacterium smegmatis).